Here is an 823-residue protein sequence, read N- to C-terminus: Degenerin-like protein asic-1 (823 aa).

At 1-38 the chain is on the cytoplasmic side; the sequence is MGKNSLKRALELDVVDFAEHTSAHGIPRAYVSTGWRRY. The chain crosses the membrane as a helical span at residues 39–59; it reads MWLLCFLFCLSCFGHQAYLIV. The Extracellular portion of the chain corresponds to 60-767; it reads ERFNRNDIIV…FGGQLGLWMG (708 aa). Intrachain disulfides connect Cys86–Cys518 and Cys494–Cys501. N-linked (GlcNAc...) asparagine glycosylation is found at Asn228, Asn326, Asn347, Asn415, and Asn486. Residues Asn527 and Asn546 are each glycosylated (N-linked (GlcNAc...) asparagine). 4 cysteine pairs are disulfide-bonded: Cys604-Cys687, Cys625-Cys683, Cys629-Cys681, and Cys638-Cys664. A GAS motif; ion selectivity filter motif is present at residues 767-769; sequence GVS. The helical transmembrane segment at 768 to 788 threads the bilayer; that stretch reads VSVITIGEVACFFFEVFISLI. Residues 789–795 lie on the Cytoplasmic side of the membrane; the sequence is SSNRTKR.

Belongs to the amiloride-sensitive sodium channel (TC 1.A.6) family. As to quaternary structure, homotrimer. Heterotrimer; with other ASIC proteins producing channel with different properties.

It is found in the cell membrane. The protein localises to the postsynaptic cell membrane. It localises to the cell projection. Its subcellular location is the dendrite. It carries out the reaction Na(+)(in) = Na(+)(out). The enzyme catalyses K(+)(in) = K(+)(out). The catalysed reaction is Li(+)(in) = Li(+)(out). It catalyses the reaction Ca(2+)(in) = Ca(2+)(out). Functionally, forms voltage-independent, pH-gated trimeric sodium channels that act as postsynaptic excitatory receptors in the nervous system, playing a crucial role in regulating synaptic plasticity, learning, and memory. Promotes synaptic vesicle fusion to positively regulate the release of dopamine at dopaminergic neuron synapses. Displays high selectivity for sodium ions but can also permit the permeation of other cations. The sequence is that of Degenerin-like protein asic-1 from Caenorhabditis elegans.